The chain runs to 516 residues: Probable 2-isopropylmalate synthase (516 aa).

One can recognise a Pyruvate carboxyltransferase domain in the interval 20 to 271 (VTVFDTTLRD…KTNIRTEYLV (252 aa)).

The protein belongs to the alpha-IPM synthase/homocitrate synthase family.

It catalyses the reaction 3-methyl-2-oxobutanoate + acetyl-CoA + H2O = (2S)-2-isopropylmalate + CoA + H(+). Its pathway is amino-acid biosynthesis; L-leucine biosynthesis; L-leucine from 3-methyl-2-oxobutanoate: step 1/4. Functionally, catalyzes the condensation of the acetyl group of acetyl-CoA with 3-methyl-2-oxobutanoate (2-oxoisovalerate) to form 3-carboxy-3-hydroxy-4-methylpentanoate (2-isopropylmalate). This Methanosarcina mazei (strain ATCC BAA-159 / DSM 3647 / Goe1 / Go1 / JCM 11833 / OCM 88) (Methanosarcina frisia) protein is Probable 2-isopropylmalate synthase (leuA).